Here is a 519-residue protein sequence, read N- to C-terminus: Sensor protein RprX (519 aa).

A run of 2 helical transmembrane segments spans residues 5–25 (TIWI…YLQV) and 260–280 (IPSM…IYIV). The region spanning 296–517 (NMTHEFKTPI…KFIIALPLLK (222 aa)) is the Histidine kinase domain. Histidine 299 bears the Phosphohistidine; by autocatalysis mark.

Its subcellular location is the cell membrane. It catalyses the reaction ATP + protein L-histidine = ADP + protein N-phospho-L-histidine.. Member of the two-component regulatory system RprX/RprY. May activate RprY by phosphorylation. This is Sensor protein RprX (rprX) from Bacteroides fragilis (strain YCH46).